We begin with the raw amino-acid sequence, 381 residues long: Putative acetyl-CoA C-acetyltransferase VraB (381 aa).

Cysteine 86 functions as the Acyl-thioester intermediate in the catalytic mechanism. The active-site Proton acceptor is the histidine 338.

The protein belongs to the thiolase-like superfamily. Thiolase family.

The polypeptide is Putative acetyl-CoA C-acetyltransferase VraB (vraB) (Staphylococcus haemolyticus (strain JCSC1435)).